Consider the following 243-residue polypeptide: 3,4-dihydroxyphthalate decarboxylase (243 aa).

E86 acts as the Proton donor/acceptor in catalysis. E86, H105, H107, and H173 together coordinate a divalent metal cation.

It belongs to the aldolase class II family. Requires a divalent metal cation as cofactor.

It carries out the reaction 3,4-dihydroxyphthalate + H(+) = 3,4-dihydroxybenzoate + CO2. Its pathway is xenobiotic degradation; phthalate degradation. In terms of biological role, catalyzes the decarboxylation of 3,4-dihydroxyphthalate to protocatechuate (3,4-dihydroxybenzoate) during phthalate metabolism. This chain is 3,4-dihydroxyphthalate decarboxylase, found in Rhodococcus jostii (strain RHA1).